Consider the following 540-residue polypeptide: 2-isopropylmalate synthase (540 aa).

The Pyruvate carboxyltransferase domain occupies 8–271 (VLIFDTTLRD…NPFFGREEDS (264 aa)). The Mn(2+) site is built by Asp17, His208, His210, and Asn244. The segment at 408–540 (QLKLVQVSCG…PVVLESRPTL (133 aa)) is regulatory domain.

Belongs to the alpha-IPM synthase/homocitrate synthase family. LeuA type 1 subfamily. Homodimer. Requires Mn(2+) as cofactor.

The protein resides in the cytoplasm. The enzyme catalyses 3-methyl-2-oxobutanoate + acetyl-CoA + H2O = (2S)-2-isopropylmalate + CoA + H(+). The protein operates within amino-acid biosynthesis; L-leucine biosynthesis; L-leucine from 3-methyl-2-oxobutanoate: step 1/4. Its function is as follows. Catalyzes the condensation of the acetyl group of acetyl-CoA with 3-methyl-2-oxobutanoate (2-ketoisovalerate) to form 3-carboxy-3-hydroxy-4-methylpentanoate (2-isopropylmalate). This Synechococcus sp. (strain CC9605) protein is 2-isopropylmalate synthase.